Reading from the N-terminus, the 296-residue chain is Ceramide synthase LOH2 (296 aa).

Helical transmembrane passes span 19 to 39 (VWHF…RLVL), 80 to 100 (LLYY…EPWA), 121 to 141 (LYYM…LAWE), 158 to 178 (IILL…IILA), 206 to 226 (FALF…FWII), and 254 to 274 (MLLM…AMIV). Positions 71-278 (VKCKESLWKL…ICAMIVRLLK (208 aa)) constitute a TLC domain. Phosphoserine is present on residues S289 and S291.

As to expression, expressed ubiquitously with highest levels in pollen.

It localises to the endoplasmic reticulum membrane. The enzyme catalyses a sphingoid base + hexadecanoyl-CoA = an N-hexadecanoyl-sphingoid base + CoA + H(+). It carries out the reaction sphinganine + hexadecanoyl-CoA = N-hexadecanoylsphinganine + CoA + H(+). It catalyses the reaction sphing-4-enine + hexadecanoyl-CoA = N-hexadecanoylsphing-4-enine + CoA + H(+). The catalysed reaction is sphinga-(4E,8E)-dienine + hexadecanoyl-CoA = N-hexadecanoylsphinga-(4E,8E)-dienine + CoA + H(+). The enzyme catalyses sphinga-(4E,8Z)-dienine + hexadecanoyl-CoA = N-hexadecanoylsphinga-(4E,8Z)-dienine + CoA + H(+). It participates in sphingolipid metabolism. Inhibited by the mycotoxin fumonisin B(1), a sphingosine analog mycotoxins produced by pathogenic fungi. Activated by divalent cation such as magnesium Mg(2+), zinc Zn(2+), manganese Mn(2+) and calcium Ca(2+). In terms of biological role, prevents cell division in root meristems and promotes salicylic acid (SA) production and hypersensitive response (HR). Catalyzes the biosynthesis of ceramide sphingolipids with C(16) fatty acids, structural membrane lipids involved in membrane trafficking (e.g. early endosomes) and cell polarity (e.g. polar auxin transport related proteins); accepts only C16:0 fatty acids, but with a wide range of d18 sphingoid bases, such as sphinganine (d18:0) and palmitoyl-CoA. Mediates resistance to sphinganine-analog mycotoxins (SAMs, e.g. fumonisin B(1)) by restoring the sphingolipid biosynthesis. Could salvage the transport of GPI-anchored proteins from the endoplasmic reticulum to the Golgi apparatus in ceramides-depleted cells after SAM exposure. Contributes to hypoxic conditions tolerance (e.g. submergences), especially in the dark, by promoting the formation of very-long-chain (VLC) ceramide species (22:1, 24:1 and 26:1) and of VLC unsaturated ceramides, which are modulating CTR1-mediated ethylene signaling leading to endoplasmic reticulum (ER)-to-nucleus translocation of EIN2 and EIN3. This chain is Ceramide synthase LOH2, found in Arabidopsis thaliana (Mouse-ear cress).